The chain runs to 475 residues: DNA-binding protein D-ETS-6 (475 aa).

The tract at residues 42–150 (SIGSGNETKL…VSPVEVPVDP (109 aa)) is disordered. The segment covering 70–108 (SSSSTSDSSASSYSSTDSDSGSSTSSSSIRSQLPALNLP) has biased composition (low complexity). Positions 109-121 (VPLPLATPTPPAV) are enriched in pro residues. Positions 122 to 144 (SSPHQAPSPRRNSSDSNRSVSPV) are enriched in low complexity. The region spanning 132-219 (RNSSDSNRSV…QHFAISLYHA (88 aa)) is the PNT domain. Positions 255 to 335 (IQLWQFLLEL…HGKRYAYKFD (81 aa)) form a DNA-binding region, ETS. The segment at 350–475 (GDPASSMLGS…PVTPTTNAFN (126 aa)) is disordered. Over residues 375–388 (PPLHHHPQHSHPHH) the composition is skewed to basic residues. Positions 401–436 (SSPASNSSSLGFPSSSTASSQASPGQAPASSSASTS) are enriched in low complexity. The span at 453–475 (RTSTSSAGNYDQGPVTPTTNAFN) shows a compositional bias: polar residues.

This sequence belongs to the ETS family. Embryonic ventral nervous system and 1 pair of neurons in each thoracic segment.

It is found in the nucleus. The protein is DNA-binding protein D-ETS-6 (Ets21C) of Drosophila melanogaster (Fruit fly).